The chain runs to 151 residues: Large-conductance mechanosensitive channel (151 aa).

2 helical membrane passes run 14-34 (VVDMAVGIIIGGAFGALVNSL) and 85-105 (GLFVNALIGFLIMAFAVFLLV).

It belongs to the MscL family. In terms of assembly, homopentamer.

Its subcellular location is the cell inner membrane. Its function is as follows. Channel that opens in response to stretch forces in the membrane lipid bilayer. May participate in the regulation of osmotic pressure changes within the cell. This is Large-conductance mechanosensitive channel from Chlorobaculum tepidum (strain ATCC 49652 / DSM 12025 / NBRC 103806 / TLS) (Chlorobium tepidum).